Reading from the N-terminus, the 293-residue chain is Epidermal growth factor-like protein 8 (293 aa).

The first 25 residues, 1-25 (MGSRAELCTLLGGFSFLLLLIPGEG), serve as a signal peptide directing secretion. The EMI domain occupies 34–112 (SQGVCSKQTL…RHPGALTCEA (79 aa)). 9 disulfides stabilise this stretch: C38–C97, C65–C71, C96–C110, C114–C124, C118–C130, C132–C141, C148–C159, C155–C168, and C170–C183. N-linked (GlcNAc...) asparagine glycosylation is present at N50. Residues 111–142 (EAICAKPCLNGGVCVRPDQCECAPGWGGKHCH) form the EGF-like 1 domain. In terms of domain architecture, EGF-like 2; calcium-binding spans 144-184 (DVDECRTSITLCSHHCFNTAGSFTCGCPHDLVLGVDGRTCM). Residues 195-232 (SILSVAVREAEKDERALKQEIHELRGRLERLEQWAGQA) are a coiled coil.

It localises to the secreted. This Homo sapiens (Human) protein is Epidermal growth factor-like protein 8 (EGFL8).